The sequence spans 474 residues: MTKKLHIKTWGCQMNEYDSSKMADLLDATHSYQLTDVAEEADVLLLNTCSIREKAQEKVFHQLGRWKLLKEKNPDLIIGVGGCVASQEGEHIRQRAHYVDIIFGPQTLHRLPEMINSVRGDRSPVVDISFPEIEKFDRLPEPRAEGPTAFVSIMEGCNKYCTYCVVPYTRGEEVSRPSDDILFEIAQLAAQGVREVNLLGQNVNAWRGENYDGSTGSFADLLRLVAAIDGIDRIRFTTSHPIEFTDDIIEVYRDTPELVSFLHLPVQSGSDRILNLMGRTHTALEYKAIIRKLRAARPDIQISSDFIVGFPGETTEDFEKTMKLIADVNFDMSYSFIFSARPGTPAADMVDDVPEEEKKQRLYILQERINQQAMAWSRRMLGTTQRILVEGTSRKSIMELSGRTENNRVVNFEGTPDMIGKFVDVEITDVYPNSLRGKVVRTEDEMGLRVAETPESVIARTRKENDLGVGYYQP.

One can recognise an MTTase N-terminal domain in the interval 3–120 (KKLHIKTWGC…LPEMINSVRG (118 aa)). 6 residues coordinate [4Fe-4S] cluster: cysteine 12, cysteine 49, cysteine 83, cysteine 157, cysteine 161, and cysteine 164. The 233-residue stretch at 143 to 375 (RAEGPTAFVS…QERINQQAMA (233 aa)) folds into the Radical SAM core domain. Residues 378–441 (RRMLGTTQRI…PNSLRGKVVR (64 aa)) form the TRAM domain.

This sequence belongs to the methylthiotransferase family. MiaB subfamily. Monomer. It depends on [4Fe-4S] cluster as a cofactor.

It is found in the cytoplasm. The enzyme catalyses N(6)-dimethylallyladenosine(37) in tRNA + (sulfur carrier)-SH + AH2 + 2 S-adenosyl-L-methionine = 2-methylsulfanyl-N(6)-dimethylallyladenosine(37) in tRNA + (sulfur carrier)-H + 5'-deoxyadenosine + L-methionine + A + S-adenosyl-L-homocysteine + 2 H(+). In terms of biological role, catalyzes the methylthiolation of N6-(dimethylallyl)adenosine (i(6)A), leading to the formation of 2-methylthio-N6-(dimethylallyl)adenosine (ms(2)i(6)A) at position 37 in tRNAs that read codons beginning with uridine. This Shigella boydii serotype 18 (strain CDC 3083-94 / BS512) protein is tRNA-2-methylthio-N(6)-dimethylallyladenosine synthase.